The primary structure comprises 147 residues: MRTTYLAKPGEVERKWYIVDATDIPLGRLSTVVASILRGKNKPTFTPNVDTGDFVIVINAEKIKLTGRKATGKIYYHHTLHPGGIKSKTAGEMREKTPERLIETSIKGMLPHNTLGRKQALKLHVYAGSEHNQQAQNPEKLDITNLI.

This sequence belongs to the universal ribosomal protein uL13 family. In terms of assembly, part of the 50S ribosomal subunit.

This protein is one of the early assembly proteins of the 50S ribosomal subunit, although it is not seen to bind rRNA by itself. It is important during the early stages of 50S assembly. The polypeptide is Large ribosomal subunit protein uL13 (Pediococcus pentosaceus (strain ATCC 25745 / CCUG 21536 / LMG 10740 / 183-1w)).